We begin with the raw amino-acid sequence, 288 residues long: Mortality factor 4-like protein 2 (288 aa).

Residues 1–15 are compositionally biased toward polar residues; it reads MSSRKQASQTRGQQS. The interval 1-115 is disordered; that stretch reads MSSRKQASQT…DPTVESEEAF (115 aa). Ser71 carries the phosphoserine modification. Residues 117–288 form the MRG domain; the sequence is SRMEVKVKIP…ASADYHRKAL (172 aa).

In terms of assembly, component of the NuA4 histone acetyltransferase complex which contains the catalytic subunit KAT5/TIP60 and the subunits EP400, TRRAP/PAF400, BRD8/SMAP, EPC1, DMAP1/DNMAP1, RUVBL1/TIP49, RUVBL2, ING3, actin, ACTL6A/BAF53A, MORF4L1/MRG15, MORF4L2/MRGX, MRGBP, YEATS4/GAS41 and VPS72/YL1. The NuA4 complex interacts with MYC and the adenovirus E1A protein. MORF4L1 may also participate in the formation of NuA4 related complexes which lack the KAT5/TIP60 catalytic subunit, but which include the SWI/SNF related protein SRCAP. Component of the MSIN3A histone deacetylase complex, which includes SIN3A, HDAC2, ARID4B, MORF4L1, RBBP4/RbAp48, and RBBP7/RbAp46. Interacts with MRFAP1 and RB1. May also interact with one or more as yet undefined members of the TLE (transducin-like enhancer of split) family of transcriptional repressors.

The protein resides in the nucleus. Functionally, component of the NuA4 histone acetyltransferase complex which is involved in transcriptional activation of select genes principally by acetylation of nucleosomal histone H4 and H2A. This modification may both alter nucleosome - DNA interactions and promote interaction of the modified histones with other proteins which positively regulate transcription. This complex may be required for the activation of transcriptional programs associated with oncogene and proto-oncogene mediated growth induction, tumor suppressor mediated growth arrest and replicative senescence, apoptosis, and DNA repair. The NuA4 complex ATPase and helicase activities seem to be, at least in part, contributed by the association of RUVBL1 and RUVBL2 with EP400. NuA4 may also play a direct role in DNA repair when directly recruited to sites of DNA damage. Also a component of the MSIN3A complex which acts to repress transcription by deacetylation of nucleosomal histones. The sequence is that of Mortality factor 4-like protein 2 (Morf4l2) from Mus musculus (Mouse).